The sequence spans 42 residues: Kappa-actitoxin-Ael2a (42 aa).

3 cysteine pairs are disulfide-bonded: Cys4/Cys37, Cys6/Cys30, and Cys20/Cys38.

This sequence belongs to the sea anemone type 3 (BDS) potassium channel toxin family.

The protein resides in the secreted. It localises to the nematocyst. Functionally, peptide with both antimicrobial and neurotoxin activities. This toxin acts both on ERG potassium channels and sodium channels. It potently and reversibly inhibits human Kv11.1/KCNH2/ERG1 (IC(50)=34 nM), rat Kv11.1/KCNH2/ERG1 and Kv11.3/KCNH7/ERG3 voltage-gated potassium channels in a similar potency. It acts as a gating-modifier toxin that shifts the voltage-dependence of ERG activation in the positive direction and suppresses its current amplitudes elicited by strong depolarizing pulses. On sodium channels, it blocks Nav1.2/SCN2A (EC(50)=31 nM), Nav1.3/SCN3A, Nav1.4/SCN4A, Nav1.5/SCN5A, Nav1.6/SCN8A, Nav1.8/SCN10A (EC(50)=92 nM). It may act by binding at site 1 or close by, only when the pore is in an open configuration. Shows antibacterial activity against the Gram-negative bacterium S.typhimurium, but not on the bacteria B.subtilis, S.aureus, and P.aeruginosa. In vivo, this toxin does not induce neurotoxic symptoms when injected into mice. In Anthopleura elegantissima (Green aggregating anemone), this protein is Kappa-actitoxin-Ael2a.